The chain runs to 444 residues: Glucoside xylosyltransferase 2 (444 aa).

The Cytoplasmic segment spans residues 1 to 4 (MKLR). Residues 5-25 (SKAAALLLLALAVLLLALLSL) form a helical; Signal-anchor for type II membrane protein membrane-spanning segment. Residues 26-444 (RARRDPEPPG…IIHMGPNPMS (419 aa)) are Lumenal-facing. The segment at 31 to 101 (PEPPGFPARP…LARRPGETRS (71 aa)) is disordered. Positions 68 to 83 (RSPRRQPPRLRPRAGR) are enriched in basic residues. Residues 87–101 (ASREKLARRPGETRS) show a composition bias toward basic and acidic residues. A glycan (N-linked (GlcNAc...) asparagine) is linked at asparagine 275.

This sequence belongs to the glycosyltransferase 8 family.

It localises to the membrane. It carries out the reaction 3-O-(beta-D-glucosyl)-L-seryl-[EGF-like domain protein] + UDP-alpha-D-xylose = 3-O-[alpha-D-xylosyl-(1-&gt;3)-beta-D-glucosyl]-L-seryl-[EGF-like domain protein] + UDP + H(+). Its function is as follows. Glycosyltransferase which elongates the O-linked glucose attached to EGF-like repeats in the extracellular domain of Notch proteins by catalyzing the addition of xylose. This Mus musculus (Mouse) protein is Glucoside xylosyltransferase 2 (Gxylt2).